Consider the following 258-residue polypeptide: Cyclohexa-1,5-dienecarbonyl-CoA hydratase (258 aa).

It belongs to the enoyl-CoA hydratase/isomerase family.

It catalyses the reaction cyclohexa-1,5-diene-1-carbonyl-CoA + H2O = 6-hydroxycyclohex-1-ene-1-carbonyl-CoA. Its pathway is aromatic compound metabolism; benzoyl-CoA degradation. In terms of biological role, catalyzes the hydration of cyclohexa-1,5-diene-1-carboxyl-CoA. This is Cyclohexa-1,5-dienecarbonyl-CoA hydratase (dch) from Thauera aromatica.